The primary structure comprises 93 residues: MGRSLKKGPFVDDHLMKKVDEQNEKNEKRVIKTWSRRSTIFPDFVGHTFAVYDGRKHVPVYVSEDMVGHKLGEFAPTRTFKGHVDNDKKSKKR.

It belongs to the universal ribosomal protein uS19 family.

Protein S19 forms a complex with S13 that binds strongly to the 16S ribosomal RNA. This is Small ribosomal subunit protein uS19 from Brevibacillus brevis (strain 47 / JCM 6285 / NBRC 100599).